We begin with the raw amino-acid sequence, 341 residues long: L-threonine 3-dehydrogenase (341 aa).

Cysteine 38 lines the Zn(2+) pocket. Catalysis depends on charge relay system residues threonine 40 and histidine 43. Zn(2+) contacts are provided by histidine 63, glutamate 64, cysteine 93, cysteine 96, cysteine 99, and cysteine 107. Residues isoleucine 175, aspartate 195, arginine 200, 262–264 (LGI), and 286–287 (IY) contribute to the NAD(+) site.

This sequence belongs to the zinc-containing alcohol dehydrogenase family. As to quaternary structure, homotetramer. The cofactor is Zn(2+).

The protein localises to the cytoplasm. It carries out the reaction L-threonine + NAD(+) = (2S)-2-amino-3-oxobutanoate + NADH + H(+). Its pathway is amino-acid degradation; L-threonine degradation via oxydo-reductase pathway; glycine from L-threonine: step 1/2. In terms of biological role, catalyzes the NAD(+)-dependent oxidation of L-threonine to 2-amino-3-ketobutyrate. This chain is L-threonine 3-dehydrogenase, found in Shewanella sediminis (strain HAW-EB3).